We begin with the raw amino-acid sequence, 747 residues long: NAD-dependent protein deacetylase sirtuin-1 (747 aa).

Residues 1–135 form a disordered region; that stretch reads MADEAALALQ…DDEGEEEEEA (135 aa). A2 is subject to N-acetylalanine. Residues 2–139 form an interaction with CLOCK region; it reads ADEAALALQP…EEEEEAAAAA (138 aa). Positions 2–268 are interaction with H1-4; the sequence is ADEAALALQP…LTGAGVSVSC (267 aa). A phosphoserine mark is found at S14 and S26. S27 carries the post-translational modification Phosphoserine; by MAPK8. Residues 32–39 carry the Nuclear localization signal motif; that stretch reads PLRKRPRR. S47 carries the phosphoserine; by MAPK8 modification. Low complexity predominate over residues 61-100; sequence PAAARGCPGAAAAALWREAEAEAAAAGGEQEAQATAAAGE. Residues 120-135 are compositionally biased toward acidic residues; the sequence is LYDEDDDDEGEEEEEA. Residues 138–145 carry the Nuclear export signal motif; the sequence is AAIGYRDN. The tract at residues 143-541 is interaction with CCAR2; that stretch reads RDNLLFGDEI…LHVSEDSSSP (399 aa). S159, S162, S172, and S173 each carry phosphoserine. Residues 223–230 carry the Nuclear localization signal motif; sequence IVINILSE. The 261-residue stretch at 236-496 folds into the Deacetylase sirtuin-type domain; the sequence is KRKDINTIED…NELCHRLGGE (261 aa). Position 238 is an N6-acetyllysine (K238). Residues 256–259 are required for interaction with the sumoylated form of CCAR2; the sequence is IIVL. NAD(+)-binding positions include 261-280 and 345-348; these read GAGV…DGIY and QNID. The active-site Proton acceptor is H363. The Zn(2+) site is built by C371 and C374. An N6-acetyllysine modification is found at K377. Zn(2+) is bound by residues C395 and C398. S-nitrosocysteine occurs at positions 395 and 398. A Nuclear export signal motif is present at residues 425-431; it reads AMKYDKD. K430 carries the N6-acetyllysine modification. Residues 440 to 442, 465 to 467, and C482 each bind NAD(+); these read GSS and NRE. K513 is modified (N6-acetyllysine). 2 disordered regions span residues 523–549 and 562–587; these read YLSE…PPDS and SNDD…TSRN. At T530 the chain carries Phosphothreonine; by DYRK1A, DYRK3 and MAPK8. S535 bears the Phosphoserine mark. The segment covering 537-549 has biased composition (polar residues); sequence DSSSPERTSPPDS. The interval 538–540 is phosphorylated at one of three serine residues; that stretch reads SSS. T544 is subject to Phosphothreonine. S545 bears the Phosphoserine mark. A compositionally biased stretch (basic and acidic residues) spans 569–580; it reads SESKGCMEEKPQ. Position 610 is an N6-acetyllysine (K610). Residues S659 and S661 each carry the phosphoserine; by CaMK2 modification. Residues 663 to 726 form a disordered region; it reads DDVLSSSSCG…FGTDGDDQEA (64 aa). Low complexity predominate over residues 666 to 677; it reads LSSSSCGSNSDS. Residues 687-707 are compositionally biased toward acidic residues; it reads EPMEDESEIEEFYNGLEDEPD. T719 is modified (phosphothreonine). S747 carries the post-translational modification Phosphoserine.

It belongs to the sirtuin family. Class I subfamily. Interacts with XBP1 isoform 2. Found in a complex with PCAF and MYOD1. Interacts with FOXO1; the interaction deacetylates FOXO1, resulting in its nuclear retention and promotion of its transcriptional activity Component of the eNoSC complex, composed of SIRT1, SUV39H1 and RRP8. Interacts with HES1, HEY2 and PML. Interacts with RPS19BP1/AROS. Interacts with CCAR2 (via N-terminus); the interaction disrupts the interaction between SIRT1 and p53/TP53. Interacts with SETD7; the interaction induces the dissociation of SIRT1 from p53/TP53 and increases p53/TP53 activity. Interacts with MYCN, NR1I2, CREBZF, TSC2, TLE1, FOS, JUN, NR0B2, PPARG, NCOR, IRS1, IRS2 and NMNAT1. Interacts with HNF1A; the interaction occurs under nutrient restriction. Interacts with SUZ12; the interaction mediates the association with the PRC4 histone methylation complex which is specific as an association with PCR2 and PCR3 complex variants is not found. Interacts with BCL6; leads to a epigenetic repression of specific target genes. Interacts with CLOCK, BMAL1 and PER2. Interacts with PPARA; the interaction seems to be modulated by NAD(+) levels. Interacts with NR1H3 and this interaction is inhibited in the presence of CCAR2. Interacts with CHEK2. Interacts with p53/TP53. Exhibits a preferential interaction with sumoylated CCAR2 over its unmodified form. Interacts with PACS2. Interacts with SIRT7. Interacts with PUS7. Interacts with TULP3. Interacts with MORN3; the interaction enhances the ubiquitination of p53/TP53. In terms of assembly, (Microbial infection) Interacts with HIV-1 Tat. Zn(2+) is required as a cofactor. Post-translationally, methylated on multiple lysine residues; methylation is enhanced after DNA damage and is dispensable for deacetylase activity toward p53/TP53. Phosphorylated. Phosphorylated by STK4/MST1, resulting in inhibition of SIRT1-mediated p53/TP53 deacetylation. Phosphorylation by MAPK8/JNK1 at Ser-27, Ser-47, and Thr-530 leads to increased nuclear localization and enzymatic activity. Phosphorylation at Thr-530 by DYRK1A and DYRK3 activates deacetylase activity and promotes cell survival. Phosphorylation by mammalian target of rapamycin complex 1 (mTORC1) at Ser-47 inhibits deacetylation activity. Phosphorylated by CaMK2, leading to increased p53/TP53 and NF-kappa-B p65/RELA deacetylation activity. Phosphorylation at Ser-27 implicating MAPK9 is linked to protein stability. There is some ambiguity for some phosphosites: Ser-159/Ser-162 and Thr-544/Ser-545. In terms of processing, proteolytically cleaved by cathepsin B upon TNF-alpha treatment to yield catalytic inactive but stable SirtT1 75 kDa fragment (75SirT1). Post-translationally, S-nitrosylated by GAPDH, leading to inhibit the NAD-dependent protein deacetylase activity. Acetylated at various Lys residues. Deacetylated via an autocatalytic mechanism. Autodeacetylation at Lys-238 promotes its protein deacetylase activity. In terms of processing, ubiquitinated; leading to degradation. Deubiquitinated by USP22; leading to stabilization. As to expression, widely expressed.

The protein resides in the nucleus. Its subcellular location is the PML body. The protein localises to the cytoplasm. It is found in the mitochondrion. It catalyses the reaction N(6)-acetyl-L-lysyl-[protein] + NAD(+) + H2O = 2''-O-acetyl-ADP-D-ribose + nicotinamide + L-lysyl-[protein]. It carries out the reaction N(6)-propanoyl-L-lysyl-[protein] + NAD(+) + H2O = 3''-O-propanoyl-ADP-D-ribose + nicotinamide + L-lysyl-[protein]. The catalysed reaction is N(6)-(2E)-butenoyl-L-lysyl-[protein] + NAD(+) + H2O = 2''-O-(2E)-but-2-enoyl-ADP-D-ribose + nicotinamide + L-lysyl-[protein]. The enzyme catalyses N(6)-[(S)-lactoyl]-L-lysyl-[protein] + NAD(+) + H2O = 2''-O-(S)-lactoyl-ADP-D-ribose + nicotinamide + L-lysyl-[protein]. Inhibited by nicotinamide. Activated by resveratrol (3,5,4'-trihydroxy-trans-stilbene), butein (3,4,2',4'-tetrahydroxychalcone), piceatannol (3,5,3',4'-tetrahydroxy-trans-stilbene), Isoliquiritigenin (4,2',4'-trihydroxychalcone), fisetin (3,7,3',4'-tetrahydroxyflavone) and quercetin (3,5,7,3',4'-pentahydroxyflavone). MAPK8/JNK1 and RPS19BP1/AROS act as positive regulators of deacetylation activity. Negatively regulated by CCAR2. In terms of biological role, NAD-dependent protein deacetylase that links transcriptional regulation directly to intracellular energetics and participates in the coordination of several separated cellular functions such as cell cycle, response to DNA damage, metabolism, apoptosis and autophagy. Can modulate chromatin function through deacetylation of histones and can promote alterations in the methylation of histones and DNA, leading to transcriptional repression. Deacetylates a broad range of transcription factors and coregulators, thereby regulating target gene expression positively and negatively. Serves as a sensor of the cytosolic ratio of NAD(+)/NADH which is altered by glucose deprivation and metabolic changes associated with caloric restriction. Is essential in skeletal muscle cell differentiation and in response to low nutrients mediates the inhibitory effect on skeletal myoblast differentiation which also involves 5'-AMP-activated protein kinase (AMPK) and nicotinamide phosphoribosyltransferase (NAMPT). Component of the eNoSC (energy-dependent nucleolar silencing) complex, a complex that mediates silencing of rDNA in response to intracellular energy status and acts by recruiting histone-modifying enzymes. The eNoSC complex is able to sense the energy status of cell: upon glucose starvation, elevation of NAD(+)/NADP(+) ratio activates SIRT1, leading to histone H3 deacetylation followed by dimethylation of H3 at 'Lys-9' (H3K9me2) by SUV39H1 and the formation of silent chromatin in the rDNA locus. Deacetylates 'Lys-266' of SUV39H1, leading to its activation. Inhibits skeletal muscle differentiation by deacetylating PCAF and MYOD1. Deacetylates H2A and 'Lys-26' of H1-4. Deacetylates 'Lys-16' of histone H4 (in vitro). Involved in NR0B2/SHP corepression function through chromatin remodeling: Recruited to LRH1 target gene promoters by NR0B2/SHP thereby stimulating histone H3 and H4 deacetylation leading to transcriptional repression. Proposed to contribute to genomic integrity via positive regulation of telomere length; however, reports on localization to pericentromeric heterochromatin are conflicting. Proposed to play a role in constitutive heterochromatin (CH) formation and/or maintenance through regulation of the available pool of nuclear SUV39H1. Upon oxidative/metabolic stress decreases SUV39H1 degradation by inhibiting SUV39H1 polyubiquitination by MDM2. This increase in SUV39H1 levels enhances SUV39H1 turnover in CH, which in turn seems to accelerate renewal of the heterochromatin which correlates with greater genomic integrity during stress response. Deacetylates 'Lys-382' of p53/TP53 and impairs its ability to induce transcription-dependent proapoptotic program and modulate cell senescence. Deacetylates TAF1B and thereby represses rDNA transcription by the RNA polymerase I. Deacetylates MYC, promotes the association of MYC with MAX and decreases MYC stability leading to compromised transformational capability. Deacetylates FOXO3 in response to oxidative stress thereby increasing its ability to induce cell cycle arrest and resistance to oxidative stress but inhibiting FOXO3-mediated induction of apoptosis transcriptional activity; also leading to FOXO3 ubiquitination and protesomal degradation. Appears to have a similar effect on MLLT7/FOXO4 in regulation of transcriptional activity and apoptosis. Deacetylates DNMT1; thereby impairs DNMT1 methyltransferase-independent transcription repressor activity, modulates DNMT1 cell cycle regulatory function and DNMT1-mediated gene silencing. Deacetylates RELA/NF-kappa-B p65 thereby inhibiting its transactivating potential and augments apoptosis in response to TNF-alpha. Deacetylates HIF1A, KAT5/TIP60, RB1 and HIC1. Deacetylates FOXO1 resulting in its nuclear retention and enhancement of its transcriptional activity leading to increased gluconeogenesis in liver. Inhibits E2F1 transcriptional activity and apoptotic function, possibly by deacetylation. Involved in HES1- and HEY2-mediated transcriptional repression. In cooperation with MYCN seems to be involved in transcriptional repression of DUSP6/MAPK3 leading to MYCN stabilization by phosphorylation at 'Ser-62'. Deacetylates MEF2D. Required for antagonist-mediated transcription suppression of AR-dependent genes which may be linked to local deacetylation of histone H3. Represses HNF1A-mediated transcription. Required for the repression of ESRRG by CREBZF. Deacetylates NR1H3 and NR1H2 and deacetylation of NR1H3 at 'Lys-434' positively regulates transcription of NR1H3:RXR target genes, promotes NR1H3 proteasomal degradation and results in cholesterol efflux; a promoter clearing mechanism after reach round of transcription is proposed. Involved in lipid metabolism: deacetylates LPIN1, thereby inhibiting diacylglycerol synthesis. Implicated in regulation of adipogenesis and fat mobilization in white adipocytes by repression of PPARG which probably involves association with NCOR1 and SMRT/NCOR2. Deacetylates p300/EP300 and PRMT1. Deacetylates ACSS2 leading to its activation, and HMGCS1 deacetylation. Involved in liver and muscle metabolism. Through deacetylation and activation of PPARGC1A is required to activate fatty acid oxidation in skeletal muscle under low-glucose conditions and is involved in glucose homeostasis. Involved in regulation of PPARA and fatty acid beta-oxidation in liver. Involved in positive regulation of insulin secretion in pancreatic beta cells in response to glucose; the function seems to imply transcriptional repression of UCP2. Proposed to deacetylate IRS2 thereby facilitating its insulin-induced tyrosine phosphorylation. Deacetylates SREBF1 isoform SREBP-1C thereby decreasing its stability and transactivation in lipogenic gene expression. Involved in DNA damage response by repressing genes which are involved in DNA repair, such as XPC and TP73, deacetylating XRCC6/Ku70, and facilitating recruitment of additional factors to sites of damaged DNA, such as SIRT1-deacetylated NBN can recruit ATM to initiate DNA repair and SIRT1-deacetylated XPA interacts with RPA2. Also involved in DNA repair of DNA double-strand breaks by homologous recombination and specifically single-strand annealing independently of XRCC6/Ku70 and NBN. Promotes DNA double-strand breaks by mediating deacetylation of SIRT6. Transcriptional suppression of XPC probably involves an E2F4:RBL2 suppressor complex and protein kinase B (AKT) signaling. Transcriptional suppression of TP73 probably involves E2F4 and PCAF. Deacetylates WRN thereby regulating its helicase and exonuclease activities and regulates WRN nuclear translocation in response to DNA damage. Deacetylates APEX1 at 'Lys-6' and 'Lys-7' and stimulates cellular AP endonuclease activity by promoting the association of APEX1 to XRCC1. Catalyzes deacetylation of ERCC4/XPF, thereby impairing interaction with ERCC1 and nucleotide excision repair (NER). Increases p53/TP53-mediated transcription-independent apoptosis by blocking nuclear translocation of cytoplasmic p53/TP53 and probably redirecting it to mitochondria. Deacetylates XRCC6/Ku70 at 'Lys-539' and 'Lys-542' causing it to sequester BAX away from mitochondria thereby inhibiting stress-induced apoptosis. Is involved in autophagy, presumably by deacetylating ATG5, ATG7 and MAP1LC3B/ATG8. Deacetylates AKT1 which leads to enhanced binding of AKT1 and PDK1 to PIP3 and promotes their activation. Proposed to play role in regulation of STK11/LBK1-dependent AMPK signaling pathways implicated in cellular senescence which seems to involve the regulation of the acetylation status of STK11/LBK1. Can deacetylate STK11/LBK1 and thereby increase its activity, cytoplasmic localization and association with STRAD; however, the relevance of such activity in normal cells is unclear. In endothelial cells is shown to inhibit STK11/LBK1 activity and to promote its degradation. Deacetylates SMAD7 at 'Lys-64' and 'Lys-70' thereby promoting its degradation. Deacetylates CIITA and augments its MHC class II transactivation and contributes to its stability. Deacetylates MECOM/EVI1. Deacetylates PML at 'Lys-487' and this deacetylation promotes PML control of PER2 nuclear localization. During the neurogenic transition, represses selective NOTCH1-target genes through histone deacetylation in a BCL6-dependent manner and leading to neuronal differentiation. Regulates the circadian expression of several core clock genes, including BMAL1, RORC, PER2 and CRY1 and plays a critical role in maintaining a controlled rhythmicity in histone acetylation, thereby contributing to circadian chromatin remodeling. Deacetylates BMAL1 and histones at the circadian gene promoters in order to facilitate repression by inhibitory components of the circadian oscillator. Deacetylates PER2, facilitating its ubiquitination and degradation by the proteasome. Protects cardiomyocytes against palmitate-induced apoptosis. Deacetylates XBP1 isoform 2; deacetylation decreases protein stability of XBP1 isoform 2 and inhibits its transcriptional activity. Deacetylates PCK1 and directs its activity toward phosphoenolpyruvate production promoting gluconeogenesis. Involved in the CCAR2-mediated regulation of PCK1 and NR1D1. Deacetylates CTNB1 at 'Lys-49'. In POMC (pro-opiomelanocortin) neurons, required for leptin-induced activation of PI3K signaling. Deacetylates SOX9; promoting SOX9 nuclear localization and transactivation activity. Involved in the regulation of centrosome duplication: deacetylates CENATAC in G1 phase, allowing for SASS6 accumulation on the centrosome and subsequent procentriole assembly. Deacetylates NDC80/HEC1. In addition to protein deacetylase activity, also acts as a protein-lysine deacylase by mediating protein delactylation, depropionylation and decrotonylation. Mediates depropionylation of Osterix (SP7). Catalyzes decrotonylation of histones; it however does not represent a major histone decrotonylase. Mediates protein delactylation of TEAD1 and YAP1. Its function is as follows. Deacetylates 'Lys-382' of p53/TP53, however with lower activity than isoform 1. In combination, the two isoforms exert an additive effect. Isoform 2 regulates p53/TP53 expression and cellular stress response and is in turn repressed by p53/TP53 presenting a SIRT1 isoform-dependent auto-regulatory loop. Catalytically inactive 75SirT1 may be involved in regulation of apoptosis. May be involved in protecting chondrocytes from apoptotic death by associating with cytochrome C and interfering with apoptosome assembly. Functionally, (Microbial infection) In case of HIV-1 infection, interacts with and deacetylates the viral Tat protein. The viral Tat protein inhibits SIRT1 deacetylation activity toward RELA/NF-kappa-B p65, thereby potentiates its transcriptional activity and SIRT1 is proposed to contribute to T-cell hyperactivation during infection. In Homo sapiens (Human), this protein is NAD-dependent protein deacetylase sirtuin-1.